Reading from the N-terminus, the 95-residue chain is UPF0213 protein ESA_03545 (95 aa).

The 76-residue stretch at 2–77 folds into the GIY-YIG domain; the sequence is EEWFLYLIRC…KQLTKRQKEQ (76 aa).

The protein belongs to the UPF0213 family.

The sequence is that of UPF0213 protein ESA_03545 from Cronobacter sakazakii (strain ATCC BAA-894) (Enterobacter sakazakii).